The following is a 182-amino-acid chain: ATP synthase subunit delta (182 aa).

This sequence belongs to the ATPase delta chain family. As to quaternary structure, F-type ATPases have 2 components, F(1) - the catalytic core - and F(0) - the membrane proton channel. F(1) has five subunits: alpha(3), beta(3), gamma(1), delta(1), epsilon(1). CF(0) has four main subunits: a(1), b(1), b'(1) and c(10-14). The alpha and beta chains form an alternating ring which encloses part of the gamma chain. F(1) is attached to F(0) by a central stalk formed by the gamma and epsilon chains, while a peripheral stalk is formed by the delta, b and b' chains.

The protein resides in the cellular thylakoid membrane. Its function is as follows. F(1)F(0) ATP synthase produces ATP from ADP in the presence of a proton or sodium gradient. F-type ATPases consist of two structural domains, F(1) containing the extramembraneous catalytic core and F(0) containing the membrane proton channel, linked together by a central stalk and a peripheral stalk. During catalysis, ATP synthesis in the catalytic domain of F(1) is coupled via a rotary mechanism of the central stalk subunits to proton translocation. Functionally, this protein is part of the stalk that links CF(0) to CF(1). It either transmits conformational changes from CF(0) to CF(1) or is implicated in proton conduction. This chain is ATP synthase subunit delta, found in Trichodesmium erythraeum (strain IMS101).